A 25-amino-acid polypeptide reads, in one-letter code: Ranatuerin-1 (25 aa).

A disulfide bridge links C19 with C25.

It belongs to the frog skin active peptide (FSAP) family. Ranatuerin subfamily. Expressed by the skin glands.

The protein resides in the secreted. In terms of biological role, antibacterial activity against Gram-positive bacterium S.aureus (MIC=50 uM) and Gram-negative bacterium E.coli (MIC=2 uM). Has activity against C.albicans (MIC=70 uM). Shows no detectable hemolytic activity towards human erythrocytes. In Aquarana catesbeiana (American bullfrog), this protein is Ranatuerin-1.